The following is a 306-amino-acid chain: Light-independent protochlorophyllide reductase iron-sulfur ATP-binding protein (306 aa).

The interval 1–31 is disordered; sequence MREAAGLEARGLKSPPILKGQDGEGSLQVHQ. Residues 50 to 55 and Lys79 contribute to the ATP site; that span reads GIGKST. A Mg(2+)-binding site is contributed by Ser54. [4Fe-4S] cluster contacts are provided by Cys135 and Cys169. ATP is bound at residue 220-221; that stretch reads NR.

The protein belongs to the NifH/BchL/ChlL family. In terms of assembly, homodimer. Protochlorophyllide reductase is composed of three subunits; BchL, BchN and BchB. The cofactor is [4Fe-4S] cluster.

The enzyme catalyses chlorophyllide a + oxidized 2[4Fe-4S]-[ferredoxin] + 2 ADP + 2 phosphate = protochlorophyllide a + reduced 2[4Fe-4S]-[ferredoxin] + 2 ATP + 2 H2O. The protein operates within porphyrin-containing compound metabolism; bacteriochlorophyll biosynthesis (light-independent). Its function is as follows. Component of the dark-operative protochlorophyllide reductase (DPOR) that uses Mg-ATP and reduced ferredoxin to reduce ring D of protochlorophyllide (Pchlide) to form chlorophyllide a (Chlide). This reaction is light-independent. The L component serves as a unique electron donor to the NB-component of the complex, and binds Mg-ATP. The protein is Light-independent protochlorophyllide reductase iron-sulfur ATP-binding protein of Jannaschia sp. (strain CCS1).